A 309-amino-acid chain; its full sequence is Testis-expressed protein 264 homolog (309 aa).

At 1–3 (MPD) the chain is on the lumenal side. A helical; Signal-anchor for type III membrane protein membrane pass occupies residues 4 to 24 (LLLLGLIGALTLLLLLTLLAF). At 25–309 (AGYSGLLTGV…ELSTPERGEE (285 aa)) the chain is on the cytoplasmic side. Positions 193 to 309 (PEVKETERKC…ELSTPERGEE (117 aa)) are disordered. The span at 208–225 (ATDTQTDGTGADTSDASS) shows a compositional bias: low complexity. A phosphoserine mark is found at serine 238 and serine 243. The span at 250–262 (GWDDGDNRSEHSY) shows a compositional bias: basic and acidic residues. Over residues 263–272 (SESGASGSSF) the composition is skewed to low complexity. The LIR motif signature appears at 272-275 (FEEL).

Interacts (via the LIR motif) with ATG8 family proteins MAP1LC3A, MAP1LC3B, GABARAP and GABARAPL1. Interacts with VCP/p97; bridging VCP/p97 to covalent DNA-protein cross-links (DPCs). Interacts with TOP1 (when sumoylated).

The protein localises to the endoplasmic reticulum membrane. It localises to the cytoplasmic vesicle. It is found in the autophagosome. The protein resides in the cytoplasm. Its subcellular location is the cytosol. The protein localises to the nucleus. It localises to the chromosome. Major reticulophagy (also called ER-phagy) receptor that acts independently of other candidate reticulophagy receptors to remodel subdomains of the endoplasmic reticulum into autophagosomes upon nutrient stress, which then fuse with lysosomes for endoplasmic reticulum turnover. The ATG8-containing isolation membrane (IM) cradles a tubular segment of TEX264-positive ER near a three-way junction, allowing the formation of a synapse of 2 juxtaposed membranes with trans interaction between the TEX264 and ATG8 proteins. Expansion of the IM would extend the capture of ER, possibly through a 'zipper-like' process involving continued trans TEX264-ATG8 interactions, until poorly understood mechanisms lead to the fission of relevant membranes and, ultimately, autophagosomal membrane closure. Also involved in the repair of covalent DNA-protein cross-links (DPCs) during DNA synthesis: acts by bridging VCP/p97 to covalent DNA-protein cross-links (DPCs) and initiating resolution of DPCs by SPRTN. The protein is Testis-expressed protein 264 homolog of Mus musculus (Mouse).